Consider the following 231-residue polypeptide: uncharacterized protein (231 aa).

6 helical membrane-spanning segments follow: residues 4–24, 29–49, 58–78, 95–115, 147–167, and 211–231; these read YIIY…LQIS, SMIF…LVIG, AGNA…ALPL, TVVI…LLLG, VTAV…YLVL, and LCGI…YFFV.

It belongs to the YohK (E.coli)/YwbG (IPA-22R) (B.subtilis) family.

The protein localises to the cell membrane. This is an uncharacterized protein from Haemophilus influenzae (strain ATCC 51907 / DSM 11121 / KW20 / Rd).